Here is a 312-residue protein sequence, read N- to C-terminus: MANDNGIKHFIDLSTVPATELRAILEDAKARKARLKAGEVERPYAGKVLAMIFEKLSTRTRVSFDVGMRQLGGETIMLTGSEMQLGRSETIADTAKVLSRYVDAIMIRTTAHERMLELAEYATVPVINALTDDTHPCQIMADVLTYEEHRGPIKGKTFAWMGDGNNVLHSLVEAAARFDFNVNIATPKGSEPKSQYIDWARANGAGIMSTTDPEKAASGADCIVTDTWVSMGQEDHARGHNVFIPYQVNANLMAKADPKALFMHCLPAHRGEEVTDEVIDGPQSVVFDEAENRLHAQKAILAWCLQDRGLGA.

Residues 57–60 (STRT), Gln-84, Arg-108, and 135–138 (HPCQ) each bind carbamoyl phosphate. L-ornithine contacts are provided by residues Asn-166, Asp-226, and 230 to 231 (SM). Carbamoyl phosphate contacts are provided by residues 265 to 266 (CL) and Arg-293.

This sequence belongs to the aspartate/ornithine carbamoyltransferase superfamily. OTCase family.

The protein resides in the cytoplasm. The catalysed reaction is carbamoyl phosphate + L-ornithine = L-citrulline + phosphate + H(+). It participates in amino-acid degradation; L-arginine degradation via ADI pathway; carbamoyl phosphate from L-arginine: step 2/2. In terms of biological role, reversibly catalyzes the transfer of the carbamoyl group from carbamoyl phosphate (CP) to the N(epsilon) atom of ornithine (ORN) to produce L-citrulline. This Brucella abortus (strain 2308) protein is Ornithine carbamoyltransferase.